The chain runs to 266 residues: MAPSKWDDEEESTSPPPVAYRRKFDDEEEEDVLDSWDAAEDSEVEREKAAKAAEAKAKAEAEAAAKKKSKAQRIQEHKEERKKREEEDSSSESEEDEAERRARLRRTEKDSDLKHAEDLFGDIDLNRTRNRGAPKAVVVSDSADPTQAVDLSAMPLFKPTTKDQFTRLTTTLAPLLTAHSKKPQYALWAQEFTKQLVKELNSGDVKKIASALTTMSNEKMREERAADKGNKKSKAAKTKVSLVTSRENKIDASYDDDDGLDDDDFM.

2 disordered regions span residues 1-142 (MAPS…VSDS) and 215-243 (MSNE…VSLV). Over residues 26–44 (DEEEEDVLDSWDAAEDSEV) the composition is skewed to acidic residues. A coiled-coil region spans residues 40-99 (EDSEVEREKAAKAAEAKAKAEAEAAAKKKSKAQRIQEHKEERKKREEEDSSSESEEDEAE). Composition is skewed to basic and acidic residues over residues 45–65 (EREK…EAAA) and 73–86 (RIQE…KREE). Over residues 87 to 97 (EDSSSESEEDE) the composition is skewed to acidic residues. 2 stretches are compositionally biased toward basic and acidic residues: residues 98–118 (AERR…HAED) and 218–230 (EKMR…DKGN).

Belongs to the eIF-3 subunit J family. In terms of assembly, component of the eukaryotic translation initiation factor 3 (eIF-3) complex.

Its subcellular location is the cytoplasm. Component of the eukaryotic translation initiation factor 3 (eIF-3) complex, which is involved in protein synthesis of a specialized repertoire of mRNAs and, together with other initiation factors, stimulates binding of mRNA and methionyl-tRNAi to the 40S ribosome. The eIF-3 complex specifically targets and initiates translation of a subset of mRNAs involved in cell proliferation. This Aspergillus terreus (strain NIH 2624 / FGSC A1156) protein is Eukaryotic translation initiation factor 3 subunit J (hcr1).